A 114-amino-acid polypeptide reads, in one-letter code: MPQQTIEELYEQALERKQNPQTGSYTDYLYQKGLDKILKKVGEESTEVILGAKNNNEELIYETSDLLFHLMVLLVEKGVSLDDIKDELGSRLGKKSLLHERADWRGDKKNEKDS.

This sequence belongs to the PRA-PH family.

The protein resides in the cytoplasm. The catalysed reaction is 1-(5-phospho-beta-D-ribosyl)-ATP + H2O = 1-(5-phospho-beta-D-ribosyl)-5'-AMP + diphosphate + H(+). Its pathway is amino-acid biosynthesis; L-histidine biosynthesis; L-histidine from 5-phospho-alpha-D-ribose 1-diphosphate: step 2/9. In Leuconostoc mesenteroides subsp. mesenteroides (strain ATCC 8293 / DSM 20343 / BCRC 11652 / CCM 1803 / JCM 6124 / NCDO 523 / NBRC 100496 / NCIMB 8023 / NCTC 12954 / NRRL B-1118 / 37Y), this protein is Phosphoribosyl-ATP pyrophosphatase.